The primary structure comprises 342 residues: Aromatic amino acid aminotransferase (342 aa).

At K214 the chain carries N6-(pyridoxal phosphate)lysine.

Belongs to the class-II pyridoxal-phosphate-dependent aminotransferase family. As to quaternary structure, homodimer. The cofactor is pyridoxal 5'-phosphate.

It catalyses the reaction an aromatic L-alpha-amino acid + 2-oxoglutarate = an aromatic oxo-acid + L-glutamate. Its function is as follows. Aminotransferase that catalyzes the conversion of aromatic amino acids and 2-oxoglutarate into corresponding aromatic oxo acids and L-glutamate. This is Aromatic amino acid aminotransferase from Corynebacterium efficiens (strain DSM 44549 / YS-314 / AJ 12310 / JCM 11189 / NBRC 100395).